A 157-amino-acid chain; its full sequence is 2-C-methyl-D-erythritol 2,4-cyclodiphosphate synthase (157 aa).

A divalent metal cation contacts are provided by D8 and H10. 4-CDP-2-C-methyl-D-erythritol 2-phosphate-binding positions include D8–H10 and H34–S35. H42 serves as a coordination point for a divalent metal cation. Residues D56–G58, F61–D65, T132–E135, and F139 each bind 4-CDP-2-C-methyl-D-erythritol 2-phosphate.

This sequence belongs to the IspF family. As to quaternary structure, homotrimer. A divalent metal cation serves as cofactor.

The enzyme catalyses 4-CDP-2-C-methyl-D-erythritol 2-phosphate = 2-C-methyl-D-erythritol 2,4-cyclic diphosphate + CMP. Its pathway is isoprenoid biosynthesis; isopentenyl diphosphate biosynthesis via DXP pathway; isopentenyl diphosphate from 1-deoxy-D-xylulose 5-phosphate: step 4/6. Its function is as follows. Involved in the biosynthesis of isopentenyl diphosphate (IPP) and dimethylallyl diphosphate (DMAPP), two major building blocks of isoprenoid compounds. Catalyzes the conversion of 4-diphosphocytidyl-2-C-methyl-D-erythritol 2-phosphate (CDP-ME2P) to 2-C-methyl-D-erythritol 2,4-cyclodiphosphate (ME-CPP) with a corresponding release of cytidine 5-monophosphate (CMP). In Clostridium botulinum (strain Alaska E43 / Type E3), this protein is 2-C-methyl-D-erythritol 2,4-cyclodiphosphate synthase.